A 290-amino-acid polypeptide reads, in one-letter code: Glycine--tRNA ligase alpha subunit (290 aa).

The protein belongs to the class-II aminoacyl-tRNA synthetase family. As to quaternary structure, tetramer of two alpha and two beta subunits.

It is found in the cytoplasm. The catalysed reaction is tRNA(Gly) + glycine + ATP = glycyl-tRNA(Gly) + AMP + diphosphate. The chain is Glycine--tRNA ligase alpha subunit from Syntrophotalea carbinolica (strain DSM 2380 / NBRC 103641 / GraBd1) (Pelobacter carbinolicus).